Here is a 542-residue protein sequence, read N- to C-terminus: MDLGWDRSRGPRRSTSSVRVRELSWQGLHNPCPQSKGPGSQRDRLGEQLVEEYLSPARLQALARVDDLRLVRTLEMCVDTREGSLGNFGVHLPNLDQLKLNGSHLGSLRDLGTSLGHLQVLWLARCGLADLDGIASLPALKELYASYNNISDLSPLCLLEQLEVLDLEGNSVEDLGQVRYLQLCPRLAMLTLEGNLVCLQPAPGPTNKVPRGYNYRAEVRKLIPQLQVLDEVPAAHTGPPAPPRLSQDWLAVKEAIKKGNGLPPLDCPRGAPIRRLDPELSLPETQSRASRPWPFSLLVRGGPLPEGLLSEDLAPEDNTSSLTHGAGQVLCGNPTKGLRERRHQCQAREPPEQLPQHRPGDPAASTSTPEPDPADSSDFLALAGLRAWREHGVRPLPYRHPESQQEGAVAPWGPRRVPEEQVHQAEPKTPSSPPSLASEPSGTSSQHLVPSPPKHPRPRDSGSSSPRWSTDLQSRGRRLRVLGSWGPGLGDGVAAVPVLRALEVASRLSPRAQGCPGPKPAPDAAARPPRAAELSHPSPVPT.

LRR repeat units follow at residues 94–115 (NLDQ…GTSL), 117–138 (HLQV…ASLP), 139–160 (ALKE…CLLE), 161–182 (QLEV…RYLQ), and 186–206 (RLAM…PGPT). Residues 207–250 (NKVPRGYNYRAEVRKLIPQLQVLDEVPAAHTGPPAPPRLSQDWL) enclose the LRRCT domain. 3 disordered regions span residues 308-377 (LLSE…ADSS), 396-475 (LPYR…LQSR), and 507-542 (RLSP…PVPT). Residues 416–426 (RVPEEQVHQAE) show a composition bias toward basic and acidic residues. Positions 522-532 (PDAAARPPRAA) are enriched in low complexity.

The protein belongs to the LRRC56 family. In terms of assembly, interacts with IFT88.

Its subcellular location is the cell projection. It localises to the cilium. In terms of biological role, required for the assembly of dynein arms. The polypeptide is Leucine-rich repeat-containing protein 56 (LRRC56) (Homo sapiens (Human)).